The sequence spans 540 residues: CTP synthase (540 aa).

An amidoligase domain region spans residues 1-273; that stretch reads MNNKDLKTKF…DDFILQHFKL (273 aa). Position 19 (S19) interacts with CTP. S19 provides a ligand contact to UTP. 20-25 lines the ATP pocket; sequence SLGKGI. Position 60 (Y60) interacts with L-glutamine. D77 is an ATP binding site. Mg(2+) is bound by residues D77 and E147. CTP-binding positions include 154 to 156, 194 to 199, and K230; these read DIE and KTKPTQ. UTP-binding positions include 194-199 and K230; that span reads KTKPTQ. Residues 306–539 form the Glutamine amidotransferase type-1 domain; the sequence is YIVLHDAYLS…VEASLLNQKN (234 aa). Residue G361 coordinates L-glutamine. C388 (nucleophile; for glutamine hydrolysis) is an active-site residue. Residues 389-392, E412, and R466 each bind L-glutamine; that span reads LGMQ. Catalysis depends on residues H512 and E514.

It belongs to the CTP synthase family. As to quaternary structure, homotetramer.

It carries out the reaction UTP + L-glutamine + ATP + H2O = CTP + L-glutamate + ADP + phosphate + 2 H(+). The catalysed reaction is L-glutamine + H2O = L-glutamate + NH4(+). The enzyme catalyses UTP + NH4(+) + ATP = CTP + ADP + phosphate + 2 H(+). It participates in pyrimidine metabolism; CTP biosynthesis via de novo pathway; CTP from UDP: step 2/2. Allosterically activated by GTP, when glutamine is the substrate; GTP has no effect on the reaction when ammonia is the substrate. The allosteric effector GTP functions by stabilizing the protein conformation that binds the tetrahedral intermediate(s) formed during glutamine hydrolysis. Inhibited by the product CTP, via allosteric rather than competitive inhibition. Functionally, catalyzes the ATP-dependent amination of UTP to CTP with either L-glutamine or ammonia as the source of nitrogen. Regulates intracellular CTP levels through interactions with the four ribonucleotide triphosphates. The chain is CTP synthase from Onion yellows phytoplasma (strain OY-M).